An 83-amino-acid polypeptide reads, in one-letter code: Turripeptide Lol11.1 (83 aa).

The signal sequence occupies residues Met1–Thr27.

Belongs to the conopeptide I2-like superfamily. In terms of processing, contains 4 disulfide bonds. In terms of tissue distribution, expressed by the venom duct.

It is found in the secreted. In terms of biological role, acts as a neurotoxin by inhibiting voltage-gated potassium channels (Kv). This Iotyrris olangoensis (Sea snail) protein is Turripeptide Lol11.1.